Consider the following 472-residue polypeptide: Uronate isomerase (472 aa).

It belongs to the metallo-dependent hydrolases superfamily. Uronate isomerase family.

The enzyme catalyses D-glucuronate = D-fructuronate. It catalyses the reaction aldehydo-D-galacturonate = keto-D-tagaturonate. Its pathway is carbohydrate metabolism; pentose and glucuronate interconversion. The polypeptide is Uronate isomerase (Oceanobacillus iheyensis (strain DSM 14371 / CIP 107618 / JCM 11309 / KCTC 3954 / HTE831)).